The following is a 301-amino-acid chain: Probable alpha-L-glutamate ligase (301 aa).

The region spanning 104–287 is the ATP-grasp domain; that stretch reads LQLMSRKGLG…VASMIIKHIE (184 aa). ATP is bound by residues Lys-141, 178 to 179, Asp-187, and 211 to 213; these read EY and RSN. Residues Asp-248, Glu-260, and Asn-262 each contribute to the Mg(2+) site. The Mn(2+) site is built by Asp-248, Glu-260, and Asn-262.

This sequence belongs to the RimK family. Mg(2+) serves as cofactor. The cofactor is Mn(2+).

In Marinomonas sp. (strain MWYL1), this protein is Probable alpha-L-glutamate ligase.